The primary structure comprises 344 residues: Ion-translocating oxidoreductase complex subunit D (344 aa).

4 helical membrane-spanning segments follow: residues 23–43, 44–64, 77–99, and 120–140; these read LVLG…GPGT, LLNL…MLAL, SALV…WLTL, and PFNP…LEMT. An FMN phosphoryl threonine modification is found at T172. A run of 5 helical transmembrane segments spans residues 198–218, 222–242, 252–272, 285–305, and 306–326; these read LGSA…LFLL, LFTW…SLLF, GSPL…FIVT, LVFG…GGYP, and DGVA…DYYT.

It belongs to the NqrB/RnfD family. The complex is composed of six subunits: RnfA, RnfB, RnfC, RnfD, RnfE and RnfG. FMN serves as cofactor.

The protein localises to the cell inner membrane. In terms of biological role, part of a membrane-bound complex that couples electron transfer with translocation of ions across the membrane. The polypeptide is Ion-translocating oxidoreductase complex subunit D (Pseudomonas aeruginosa (strain UCBPP-PA14)).